A 257-amino-acid polypeptide reads, in one-letter code: Phosphatidylglycerol--prolipoprotein diacylglyceryl transferase (257 aa).

7 helical membrane passes run 13-33 (FGPIAVHWYGIFMAISIAVGG), 49-69 (FLLNLLMIVVIFGVIGARLMF), 88-108 (IYEGGLSWHGAVLGGFLAGLY), 123-143 (FAVVGLALGNMLVRVGNIFNH), 152-172 (FFFGRWPAQLVGVAIGAFLLI), 186-202 (YQFWSFIFYYQLLRGVF), and 223-243 (IGLFTMTQVATPFILILAYWM). A 1,2-diacyl-sn-glycero-3-phospho-(1'-sn-glycerol) is bound at residue Arg-136.

Belongs to the Lgt family.

The protein localises to the cell membrane. It catalyses the reaction L-cysteinyl-[prolipoprotein] + a 1,2-diacyl-sn-glycero-3-phospho-(1'-sn-glycerol) = an S-1,2-diacyl-sn-glyceryl-L-cysteinyl-[prolipoprotein] + sn-glycerol 1-phosphate + H(+). The protein operates within protein modification; lipoprotein biosynthesis (diacylglyceryl transfer). Its function is as follows. Catalyzes the transfer of the diacylglyceryl group from phosphatidylglycerol to the sulfhydryl group of the N-terminal cysteine of a prolipoprotein, the first step in the formation of mature lipoproteins. The chain is Phosphatidylglycerol--prolipoprotein diacylglyceryl transferase from Caldanaerobacter subterraneus subsp. tengcongensis (strain DSM 15242 / JCM 11007 / NBRC 100824 / MB4) (Thermoanaerobacter tengcongensis).